We begin with the raw amino-acid sequence, 85 residues long: Progonadoliberin-2 (85 aa).

The first 23 residues, 1–23 (MCVSRLALLLGLLLCVGAQLSFA), serve as a signal peptide directing secretion. Glutamine 24 is modified (pyrrolidone carboxylic acid). Glycine amide is present on glycine 33.

It belongs to the GnRH family. As to expression, expressed in only one cell group in the mesencephalon.

It is found in the secreted. In terms of biological role, stimulates the secretion of gonadotropins. The protein is Progonadoliberin-2 (gnrh2) of Haplochromis burtoni (Burton's mouthbrooder).